Here is a 338-residue protein sequence, read N- to C-terminus: Holliday junction branch migration complex subunit RuvB (338 aa).

Residues 4-184 (ADRLMSAAAV…FGIVQRLEFY (181 aa)) are large ATPase domain (RuvB-L). ATP is bound by residues Ile-23, Arg-24, Gly-65, Lys-68, Thr-69, Thr-70, 131-133 (EDY), Arg-174, Tyr-184, and Arg-221. Residue Thr-69 participates in Mg(2+) binding. The segment at 185-255 (QTGDLQHIVS…VAVSALNMLN (71 aa)) is small ATPAse domain (RuvB-S). A head domain (RuvB-H) region spans residues 258–338 (TEGFDFMDRK…GLEEHGGDPE (81 aa)). DNA-binding residues include Arg-294, Arg-313, and Arg-318.

It belongs to the RuvB family. Homohexamer. Forms an RuvA(8)-RuvB(12)-Holliday junction (HJ) complex. HJ DNA is sandwiched between 2 RuvA tetramers; dsDNA enters through RuvA and exits via RuvB. An RuvB hexamer assembles on each DNA strand where it exits the tetramer. Each RuvB hexamer is contacted by two RuvA subunits (via domain III) on 2 adjacent RuvB subunits; this complex drives branch migration. In the full resolvosome a probable DNA-RuvA(4)-RuvB(12)-RuvC(2) complex forms which resolves the HJ.

The protein resides in the cytoplasm. It catalyses the reaction ATP + H2O = ADP + phosphate + H(+). Its function is as follows. The RuvA-RuvB-RuvC complex processes Holliday junction (HJ) DNA during genetic recombination and DNA repair, while the RuvA-RuvB complex plays an important role in the rescue of blocked DNA replication forks via replication fork reversal (RFR). RuvA specifically binds to HJ cruciform DNA, conferring on it an open structure. The RuvB hexamer acts as an ATP-dependent pump, pulling dsDNA into and through the RuvAB complex. RuvB forms 2 homohexamers on either side of HJ DNA bound by 1 or 2 RuvA tetramers; 4 subunits per hexamer contact DNA at a time. Coordinated motions by a converter formed by DNA-disengaged RuvB subunits stimulates ATP hydrolysis and nucleotide exchange. Immobilization of the converter enables RuvB to convert the ATP-contained energy into a lever motion, pulling 2 nucleotides of DNA out of the RuvA tetramer per ATP hydrolyzed, thus driving DNA branch migration. The RuvB motors rotate together with the DNA substrate, which together with the progressing nucleotide cycle form the mechanistic basis for DNA recombination by continuous HJ branch migration. Branch migration allows RuvC to scan DNA until it finds its consensus sequence, where it cleaves and resolves cruciform DNA. This is Holliday junction branch migration complex subunit RuvB from Sodalis glossinidius (strain morsitans).